Consider the following 132-residue polypeptide: Replication enhancer protein (132 aa).

Belongs to the geminiviridae replication enhancer protein family. In terms of assembly, homooligomer. Interacts with the replication-associated protein (REP). Interacts with host proliferating cell nuclear antigen (PCNA). Interacts with host retinoblastoma-related protein 1 (RBR1), and may thereby deregulate the host cell cycle. Oligomerization and interaction with PCNA are necessary for optimal replication enhancement.

Its function is as follows. Increases viral DNA accumulation. Enhances infectivity and symptom expression. This chain is Replication enhancer protein, found in Solanum lycopersicum (Tomato).